A 565-amino-acid polypeptide reads, in one-letter code: Adenine deaminase (565 aa).

It belongs to the metallo-dependent hydrolases superfamily. Adenine deaminase family. Mn(2+) serves as cofactor.

The catalysed reaction is adenine + H2O + H(+) = hypoxanthine + NH4(+). In Cereibacter sphaeroides (strain ATCC 17023 / DSM 158 / JCM 6121 / CCUG 31486 / LMG 2827 / NBRC 12203 / NCIMB 8253 / ATH 2.4.1.) (Rhodobacter sphaeroides), this protein is Adenine deaminase.